The following is a 66-amino-acid chain: Ribosome biogenesis protein Nop10 (66 aa).

This sequence belongs to the NOP10 family.

Involved in ribosome biogenesis; more specifically in 18S rRNA pseudouridylation and in cleavage of pre-rRNA. This chain is Ribosome biogenesis protein Nop10, found in Desulfurococcus amylolyticus (strain DSM 18924 / JCM 16383 / VKM B-2413 / 1221n) (Desulfurococcus kamchatkensis).